Here is a 152-residue protein sequence, read N- to C-terminus: MIKERTFLAIKPDGVQRGYIAEIIGRFEKKGFKLVGLKQLIPSKQLAQDHYGVHRERPFFKDLVNFISSGPVVAMIWEGEGVILSARKIIGATKPLEAEPGTIRGDLAIDIGRNIIHGSDGEETAKFEINLWFDQHEICDWETSDSEWRVES.

Residues Lys-11, Phe-59, Arg-87, Thr-93, Arg-104, and Asn-114 each contribute to the ATP site. His-117 functions as the Pros-phosphohistidine intermediate in the catalytic mechanism.

The protein belongs to the NDK family. Homotetramer. Requires Mg(2+) as cofactor.

It is found in the cytoplasm. It catalyses the reaction a 2'-deoxyribonucleoside 5'-diphosphate + ATP = a 2'-deoxyribonucleoside 5'-triphosphate + ADP. The enzyme catalyses a ribonucleoside 5'-diphosphate + ATP = a ribonucleoside 5'-triphosphate + ADP. In terms of biological role, major role in the synthesis of nucleoside triphosphates other than ATP. The ATP gamma phosphate is transferred to the NDP beta phosphate via a ping-pong mechanism, using a phosphorylated active-site intermediate. The sequence is that of Nucleoside diphosphate kinase from Prochlorococcus marinus (strain MIT 9515).